We begin with the raw amino-acid sequence, 366 residues long: Histone-lysine N-methyltransferase SETD7 (366 aa).

3 MORN repeats span residues 36-58 (FEGN…DGST), 59-81 (LEGY…DGGV), and 106-128 (FKGQ…DGGS). An SET domain is found at 214-336 (ERVYVAESLI…ADEELTVAYG (123 aa)). S-adenosyl-L-methionine-binding positions include 226–228 (AGE), N296, H297, and E356.

This sequence belongs to the class V-like SAM-binding methyltransferase superfamily. Histone-lysine methyltransferase family. SET7 subfamily. In terms of assembly, interacts with IPF1/PDX-1. As to expression, widely expressed. Expressed in pancreatic islets.

It is found in the nucleus. The protein localises to the chromosome. The enzyme catalyses L-lysyl(4)-[histone H3] + S-adenosyl-L-methionine = N(6)-methyl-L-lysyl(4)-[histone H3] + S-adenosyl-L-homocysteine + H(+). It carries out the reaction L-lysyl-[protein] + S-adenosyl-L-methionine = N(6)-methyl-L-lysyl-[protein] + S-adenosyl-L-homocysteine + H(+). In terms of biological role, histone methyltransferase that specifically monomethylates 'Lys-4' of histone H3. H3 'Lys-4' methylation represents a specific tag for epigenetic transcriptional activation. Plays a central role in the transcriptional activation of genes such as collagenase or insulin. Recruited by IPF1/PDX-1 to the insulin promoter, leading to activate transcription. Also has methyltransferase activity toward non-histone proteins such as CGAS, p53/TP53, TAF10, and possibly TAF7 by recognizing and binding the [KR]-[STA]-K in substrate proteins. Monomethylates 'Lys-189' of TAF10, leading to increase the affinity of TAF10 for RNA polymerase II. Monomethylates 'Lys-372' of p53/TP53, stabilizing p53/TP53 and increasing p53/TP53-mediated transcriptional activation. Monomethylates 'Lys-491' of CGAS, promoting interaction between SGF29 and CGAS. This Homo sapiens (Human) protein is Histone-lysine N-methyltransferase SETD7 (SETD7).